The following is an 872-amino-acid chain: Paladin (872 aa).

Residues 1–37 (MGTTASAAQQVPSTVPSSENVQGNGSGSSNVEDRNSL) form a disordered region. The N-myristoyl glycine moiety is linked to residue Gly2. Residues 186–210 (RRKENLHENLHDLEKGLRAENLELA) are a coiled coil.

It belongs to the paladin family.

The protein localises to the cytoplasm. It localises to the cytosol. In Xenopus tropicalis (Western clawed frog), this protein is Paladin (pald1).